Consider the following 2376-residue polypeptide: Reducing polyketide synthase DEP5 (2376 aa).

A Ketosynthase family 3 (KS3) domain is found at 47 to 477 (LEPIAVVGMG…GTNAHTIIES (431 aa)). Catalysis depends on for beta-ketoacyl synthase activity residues Cys-221, His-358, and His-399. Residues 593-906 (VFTGQGAQWA…QYLPTLVRGF (314 aa)) form a malonyl-CoA:ACP transacylase (MAT) domain region. Ser-685 functions as the For malonyltransferase activity in the catalytic mechanism. The interval 983 to 1121 (HDVLGQLTTG…GSIAIRTSAR (139 aa)) is N-terminal hotdog fold. The segment at 983 to 1158 (HDVLGQLTTG…FNYGPTFQDM (176 aa)) is dehydratase (DH) domain. Residues 983–1286 (HDVLGQLTTG…CIAYEAAIPQ (304 aa)) enclose the PKS/mFAS DH domain. The Proton acceptor; for dehydratase activity role is filled by His-1015. Positions 1131–1286 (LPQRASGRLW…CIAYEAAIPQ (156 aa)) are C-terminal hotdog fold. Asp-1195 (proton donor; for dehydratase activity) is an active-site residue. An enoyl reductase (ER) domain region spans residues 1659–1964 (GRIQAGKVVF…DSICDNKIVI (306 aa)). The tract at residues 1988–2163 (ATYLLVGCLG…KPACAVVLPM (176 aa)) is ketoreductase (KR) domain. One can recognise a Carrier domain in the interval 2289-2368 (DLVRDHFIAK…KFSELVCGAQ (80 aa)). Ser-2327 is subject to O-(pantetheine 4'-phosphoryl)serine.

Its pathway is polyketide biosynthesis. Its function is as follows. Reducing polyketide synthase; part of the gene cluster that mediates the biosynthesis of depudecin, a highly oxidized eleven-carbon linear polyketide that acts as a histone deacetylase (HDAC) inhibitor and makes a small contribution to pathogenesis. The reducing polyketide synthase DEP5 is the central enzyme in depudecin biosynthesis by yielding the backbone polyketide chain. The monooxygenases DEP2 and DEP4, as well as the uncharacterized protein DEP1, then act as tailoring enzymes to modify the intermediate polyketide chain into depudecin. In Alternaria brassicicola (Dark leaf spot agent), this protein is Reducing polyketide synthase DEP5.